A 506-amino-acid chain; its full sequence is Maturase K (506 aa).

Belongs to the intron maturase 2 family. MatK subfamily.

It is found in the plastid. The protein resides in the chloroplast. Its function is as follows. Usually encoded in the trnK tRNA gene intron. Probably assists in splicing its own and other chloroplast group II introns. This chain is Maturase K, found in Melilotus albus (White sweet clover).